We begin with the raw amino-acid sequence, 248 residues long: PF03932 family protein CutC (248 aa).

Belongs to the CutC family. Homodimer.

The protein localises to the cytoplasm. The protein is PF03932 family protein CutC of Salmonella heidelberg (strain SL476).